We begin with the raw amino-acid sequence, 383 residues long: Acetylornithine deacetylase (383 aa).

A Zn(2+)-binding site is contributed by histidine 80. Aspartate 82 is an active-site residue. Position 112 (aspartate 112) interacts with Zn(2+). The active site involves glutamate 144. Glutamate 145, glutamate 169, and histidine 355 together coordinate Zn(2+).

Belongs to the peptidase M20A family. ArgE subfamily. In terms of assembly, homodimer. The cofactor is Zn(2+). It depends on Co(2+) as a cofactor. Glutathione is required as a cofactor.

Its subcellular location is the cytoplasm. It catalyses the reaction N(2)-acetyl-L-ornithine + H2O = L-ornithine + acetate. Its pathway is amino-acid biosynthesis; L-arginine biosynthesis; L-ornithine from N(2)-acetyl-L-ornithine (linear): step 1/1. Its function is as follows. Catalyzes the hydrolysis of the amide bond of N(2)-acetylated L-amino acids. Cleaves the acetyl group from N-acetyl-L-ornithine to form L-ornithine, an intermediate in L-arginine biosynthesis pathway, and a branchpoint in the synthesis of polyamines. This Escherichia coli O157:H7 protein is Acetylornithine deacetylase.